The following is a 117-amino-acid chain: Synaptobrevin homolog 1 (117 aa).

Residues 1 to 30 form a disordered region; the sequence is MSSSTPFDPYALSEHDEERPQNVQSKSRTA. The Cytoplasmic portion of the chain corresponds to 1-94; sequence MSSSTPFDPY…MWYKDLKMKM (94 aa). The v-SNARE coiled-coil homology domain occupies 28 to 88; sequence RTAELQAEID…NRVRKAMWYK (61 aa). Residue Lys-63 forms a Glycyl lysine isopeptide (Lys-Gly) (interchain with G-Cter in ubiquitin) linkage. The S-palmitoyl cysteine moiety is linked to residue Cys-95. Residues 95–111 form a helical; Anchor for type IV membrane protein membrane-spanning segment; the sequence is CLALVIIILLVVIIVPI. Over 112-117 the chain is Vesicular; the sequence is AVHFSR.

It belongs to the synaptobrevin family. In terms of processing, palmitoylated by SWF1.

Its subcellular location is the endomembrane system. SNC1 and SNC2 are vesicle-targeting proteins essential for normal secretory traffic between the Golgi and the plasma membrane. They may also be involved in vesicle fusion. The chain is Synaptobrevin homolog 1 (SNC1) from Saccharomyces cerevisiae (strain ATCC 204508 / S288c) (Baker's yeast).